Reading from the N-terminus, the 226-residue chain is Transcription repressor OFP12 (226 aa).

Over residues 68–87 the composition is skewed to low complexity; sequence SSTFTASTSTAANSSSSSAS. A disordered region spans residues 68-104; sequence SSTFTASTSTAANSSSSSASYDDSDNYGFAPDDDSPP. In terms of domain architecture, OVATE spans 152–217; sequence VKHYVQSPDP…IRAFADILVS (66 aa).

Interacts with KNAT1, KNAT2, KNAT3 and KNAT4. Expressed in roots, shoots, stems, flower buds and siliques.

The protein localises to the nucleus. Functionally, transcriptional repressor that regulates multiple aspects of plant growth and development through the regulation of BEL1-LIKE (BLH) and KNOX TALE (KNAT) homeodomain transcription factors. This chain is Transcription repressor OFP12 (OFP12), found in Arabidopsis thaliana (Mouse-ear cress).